We begin with the raw amino-acid sequence, 89 residues long: Cytochrome b-c1 complex subunit 6, mitochondrial (89 aa).

A mitochondrion-targeting transit peptide spans 1–13; it reads MGLEDERKMLTGS. The segment at 1–27 is disordered; the sequence is MGLEDERKMLTGSGDPKEEEEEELVDP. Cystine bridges form between cysteine 35/cysteine 79 and cysteine 51/cysteine 65. The residue at position 40 (lysine 40) is an N6-acetyllysine. Lysine 83 is subject to N6-acetyllysine.

It belongs to the UQCRH/QCR6 family. In terms of assembly, component of the ubiquinol-cytochrome c oxidoreductase (cytochrome b-c1 complex, complex III, CIII), a multisubunit enzyme composed of 11 subunits. The complex is composed of 3 respiratory subunits cytochrome b, cytochrome c1 and Rieske protein UQCRFS1, 2 core protein subunits UQCRC1/QCR1 and UQCRC2/QCR2, and 6 low-molecular weight protein subunits UQCRH/QCR6, UQCRB/QCR7, UQCRQ/QCR8, UQCR10/QCR9, UQCR11/QCR10 and subunit 9, the cleavage product of Rieske protein UQCRFS1. The complex exists as an obligatory dimer and forms supercomplexes (SCs) in the inner mitochondrial membrane with NADH-ubiquinone oxidoreductase (complex I, CI) and cytochrome c oxidase (complex IV, CIV), resulting in different assemblies (supercomplex SCI(1)III(2)IV(1) and megacomplex MCI(2)III(2)IV(2)).

The protein resides in the mitochondrion inner membrane. Functionally, component of the ubiquinol-cytochrome c oxidoreductase, a multisubunit transmembrane complex that is part of the mitochondrial electron transport chain which drives oxidative phosphorylation. The respiratory chain contains 3 multisubunit complexes succinate dehydrogenase (complex II, CII), ubiquinol-cytochrome c oxidoreductase (cytochrome b-c1 complex, complex III, CIII) and cytochrome c oxidase (complex IV, CIV), that cooperate to transfer electrons derived from NADH and succinate to molecular oxygen, creating an electrochemical gradient over the inner membrane that drives transmembrane transport and the ATP synthase. The cytochrome b-c1 complex catalyzes electron transfer from ubiquinol to cytochrome c, linking this redox reaction to translocation of protons across the mitochondrial inner membrane, with protons being carried across the membrane as hydrogens on the quinol. In the process called Q cycle, 2 protons are consumed from the matrix, 4 protons are released into the intermembrane space and 2 electrons are passed to cytochrome c. This chain is Cytochrome b-c1 complex subunit 6, mitochondrial (Uqcrh), found in Rattus norvegicus (Rat).